A 530-amino-acid polypeptide reads, in one-letter code: Ubiquitin carboxyl-terminal hydrolase 17-like protein 19 (530 aa).

A USP domain is found at 80–375 (AGLQNMGNTC…QAYVLFYIQK (296 aa)). Catalysis depends on cysteine 89, which acts as the Nucleophile. Catalysis depends on histidine 334, which acts as the Proton acceptor. Basic and acidic residues-rich tracts occupy residues 382–392 (SESVSRGREPR) and 398–413 (DTDR…RDHP). 2 disordered regions span residues 382–413 (SESV…RDHP) and 476–530 (KNHH…LVCQ). The span at 484–495 (SSLLKLSSTTPT) shows a compositional bias: low complexity. The span at 496–505 (HQESMNTGTL) shows a compositional bias: polar residues. Residues 510–524 (GRARRSKGKNKHSKR) are compositionally biased toward basic residues.

This sequence belongs to the peptidase C19 family. USP17 subfamily.

It localises to the nucleus. The protein resides in the endoplasmic reticulum. It carries out the reaction Thiol-dependent hydrolysis of ester, thioester, amide, peptide and isopeptide bonds formed by the C-terminal Gly of ubiquitin (a 76-residue protein attached to proteins as an intracellular targeting signal).. Deubiquitinating enzyme that removes conjugated ubiquitin from specific proteins to regulate different cellular processes that may include cell proliferation, progression through the cell cycle, apoptosis, cell migration, and the cellular response to viral infection. The polypeptide is Ubiquitin carboxyl-terminal hydrolase 17-like protein 19 (USP17L19) (Homo sapiens (Human)).